The following is a 921-amino-acid chain: Eukaryotic translation initiation factor 3 subunit A (921 aa).

The PCI domain occupies 319 to 493 (FKFYASQLVL…GVVSFMEDPF (175 aa)). Residues 497–524 (GGSTATNADDEQRNDDGYEETHVEEEPE) are disordered. The span at 506 to 517 (DEQRNDDGYEET) shows a compositional bias: basic and acidic residues. Coiled-coil stretches lie at residues 562–647 (ARNE…NEKT) and 693–868 (ERMS…IKRN). Positions 818-865 (AAKEHDDRQRMLQDRLTKERKERERVNKEKDEAARKQREIEEAVERTI) are enriched in basic and acidic residues. Residues 818 to 921 (AAKEHDDRQR…KMKLRRAGRA (104 aa)) are disordered. Residues 873-890 (PAPPVRSAPPARAAPPPR) show a composition bias toward pro residues. Over residues 903–913 (PEKKLTYAEKM) the composition is skewed to basic and acidic residues.

The protein belongs to the eIF-3 subunit A family. As to quaternary structure, component of the eukaryotic translation initiation factor 3 (eIF-3) complex.

It localises to the cytoplasm. In terms of biological role, RNA-binding component of the eukaryotic translation initiation factor 3 (eIF-3) complex, which is involved in protein synthesis of a specialized repertoire of mRNAs and, together with other initiation factors, stimulates binding of mRNA and methionyl-tRNAi to the 40S ribosome. The eIF-3 complex specifically targets and initiates translation of a subset of mRNAs involved in cell proliferation. The sequence is that of Eukaryotic translation initiation factor 3 subunit A from Eremothecium gossypii (strain ATCC 10895 / CBS 109.51 / FGSC 9923 / NRRL Y-1056) (Yeast).